The primary structure comprises 194 residues: Endoribonuclease ToxN (194 aa).

Positions 114–182 form a coiled coil; the sequence is MLKQYLFLKE…DQAKERDKAR (69 aa). Basic and acidic residues predominate over residues 171–182; sequence ERDQAKERDKAR. The tract at residues 171 to 194 is disordered; sequence ERDQAKERDKARRIAYMRQMGRER.

This sequence belongs to the ToxN/AbiQ toxin family. As to quaternary structure, one ToxN monomer binds to a 34-nt-long single repeat of the ToxI RNA; this complex forms a triangular heterohexameric complex with ToxN connected by the ToxI RNA to another toxin molecule. The ToxI repeats are cleavage products of their precursor. The ToxI repeat forms a pseudoknot which occludes the toxin active site.

Its function is as follows. Toxic component of a type III toxin-antitoxin (TA) system. An endoribonuclease which cleaves between the first and second A of AAAAA sequences; it tolerates other nucleotides in positions +2 and +4 of the consensus. Digests cognate antitoxin RNA ToxI as shown by the 2'-3'-cyclic phosphate at the 3' end of the 34-nt repeats and probably other RNAs. Inhibits growth when expressed in E.coli without causing cell lysis; this bacteriostatic effect is neutralized by cognate RNA antitoxin ToxI, which has 2.9 nearly identical 34 nucleotide-long repeats. Non-cognate antitoxin RNA from P.atrosepticum does not inhibit this toxin. The toxin-antitoxin pair function in plasmid maintenance (a plasmid addiction system), but unlike its P.atrosepticum homolog it is not seen to confer resistance to bacteriophages. The chain is Endoribonuclease ToxN from Bacillus thuringiensis subsp. kurstaki.